The primary structure comprises 475 residues: MSPQTETKSSVGFKAGVKDYKLTYYTPEYETLDTDILAAFRVTPQPGVPPEEAGAAVAAESSTGTWTTVWTDGLTSLDRYKGRCYHIEPVAGEENQYICYVAYPLDLFEEGSVTNMFTSIVGNVFGFKALRALRLEDLRVPVAYIKTFQGPPHGIQVERDKLNKYGRPLLGCTIKPKLGLSAKNYGRAVYECLRGGLDFTKDDENVNSQPFMRWRDRFLFCAEAIYKAQAETGEIKGHYLNATAGTCEEMIKRAVFARELGVPIVMHDYITGGFTANTSLAHYCRDNGLLLHIHRAMHAVIDRQKNHGMHFRVLAKALRLSGGDHIHAGTVVGKLEGEREITLGFVDLLRDDFTEKDRSRGIYFTQSWVSTPGVLPVASGGIHVWHMPALTEIFGDDSVLQFGGGTLGHPWGNAPGAVANRVALEACVQARNEGRDLAREGNTIIREACKWSPELAAACEVWKEIKFEFQAMDTI.

A propeptide spanning residues 1-2 (MS) is cleaved from the precursor. Pro3 is subject to N-acetylproline. An N6,N6,N6-trimethyllysine modification is found at Lys14. Substrate-binding residues include Asn123 and Thr173. The active-site Proton acceptor is the Lys175. Lys177 contributes to the substrate binding site. Mg(2+) contacts are provided by Lys201, Asp203, and Glu204. An N6-carboxylysine modification is found at Lys201. His294 acts as the Proton acceptor in catalysis. Residues Arg295, His327, and Ser379 each coordinate substrate.

Belongs to the RuBisCO large chain family. Type I subfamily. As to quaternary structure, heterohexadecamer of 8 large chains and 8 small chains; disulfide-linked. The disulfide link is formed within the large subunit homodimers. Mg(2+) is required as a cofactor. Post-translationally, the disulfide bond which can form in the large chain dimeric partners within the hexadecamer appears to be associated with oxidative stress and protein turnover.

It localises to the plastid. It is found in the chloroplast. It carries out the reaction 2 (2R)-3-phosphoglycerate + 2 H(+) = D-ribulose 1,5-bisphosphate + CO2 + H2O. It catalyses the reaction D-ribulose 1,5-bisphosphate + O2 = 2-phosphoglycolate + (2R)-3-phosphoglycerate + 2 H(+). RuBisCO catalyzes two reactions: the carboxylation of D-ribulose 1,5-bisphosphate, the primary event in carbon dioxide fixation, as well as the oxidative fragmentation of the pentose substrate in the photorespiration process. Both reactions occur simultaneously and in competition at the same active site. This is Ribulose bisphosphate carboxylase large chain from Cerastium glomeratum (Sticky chickweed).